A 639-amino-acid chain; its full sequence is Homeobox protein 9 (639 aa).

Disordered stretches follow at residues 1-45 (MLNS…DKQN), 66-144 (SPNH…DDNS), 157-179 (NQNQ…QNQN), 262-313 (PRTL…SSGT), 331-422 (SESS…QTSN), and 436-547 (TNKN…NNEN). The stretch at 72 to 109 (ANNNNNNNNNNNNNNNNNNNNNNNNNNNNNNNNNNNIQ) forms a coiled coil. 2 stretches are compositionally biased toward low complexity: residues 73–119 (NNNN…SNNN) and 126–142 (GSLN…GNDD). Coiled-coil stretches lie at residues 152–184 (SNQN…KDSW) and 230–296 (EIEI…NINE). Over residues 266–300 (NNSSDSISENINNNNNNNNNNNNNNNNNINESNIN) the composition is skewed to low complexity. The segment covering 345 to 354 (QPRKVPRDLN) has biased composition (basic and acidic residues). Over residues 358–399 (NNNINYANNNNNNNNNNNNNNHNNNINNNNNNNNNNNNNSNN) the composition is skewed to low complexity. Residues 365-396 (NNNNNNNNNNNNNNHNNNINNNNNNNNNNNNN) are a coiled coil. The span at 405–422 (GSITNSVNIKPSKDQTSN) shows a compositional bias: polar residues. The span at 436–526 (TNKNNNNNNN…NNNLTSSSNN (91 aa)) shows a compositional bias: low complexity. The span at 532-547 (GNTSPNQSSANGNNEN) shows a compositional bias: polar residues. The segment at residues 559–621 (KRKKRGKLPG…NARRRILPRQ (63 aa)) is a DNA-binding region (homeobox).

It is found in the nucleus. Its function is as follows. Putative transcription factor. The chain is Homeobox protein 9 (hbx9) from Dictyostelium discoideum (Social amoeba).